We begin with the raw amino-acid sequence, 349 residues long: Protein-glutamate methylesterase/protein-glutamine glutaminase (349 aa).

The Response regulatory domain maps to 5 to 122; it reads RVLSVDDSAL…REGMLAYSEM (118 aa). Aspartate 56 bears the 4-aspartylphosphate mark. One can recognise a CheB-type methylesterase domain in the interval 152–344; that stretch reads LLSSEKLIAI…QQMLAKISAG (193 aa). Residues serine 164, histidine 190, and aspartate 286 contribute to the active site.

The protein belongs to the CheB family. In terms of processing, phosphorylated by CheA. Phosphorylation of the N-terminal regulatory domain activates the methylesterase activity.

It localises to the cytoplasm. It carries out the reaction [protein]-L-glutamate 5-O-methyl ester + H2O = L-glutamyl-[protein] + methanol + H(+). The enzyme catalyses L-glutaminyl-[protein] + H2O = L-glutamyl-[protein] + NH4(+). Its function is as follows. Involved in chemotaxis. Part of a chemotaxis signal transduction system that modulates chemotaxis in response to various stimuli. Catalyzes the demethylation of specific methylglutamate residues introduced into the chemoreceptors (methyl-accepting chemotaxis proteins or MCP) by CheR. Also mediates the irreversible deamidation of specific glutamine residues to glutamic acid. The polypeptide is Protein-glutamate methylesterase/protein-glutamine glutaminase (Salmonella paratyphi A (strain ATCC 9150 / SARB42)).